A 268-amino-acid polypeptide reads, in one-letter code: Peptide transport system ATP-binding protein SapF (268 aa).

Positions Leu-6–Ile-251 constitute an ABC transporter domain. Gly-47–Ser-54 lines the ATP pocket.

This sequence belongs to the ABC transporter superfamily.

It localises to the cell inner membrane. Involved in a peptide intake transport system that plays a role in the resistance to antimicrobial peptides. The polypeptide is Peptide transport system ATP-binding protein SapF (sapF) (Escherichia coli O6:H1 (strain CFT073 / ATCC 700928 / UPEC)).